A 91-amino-acid chain; its full sequence is Large ribosomal subunit protein bL31B (91 aa).

This sequence belongs to the bacterial ribosomal protein bL31 family. Type B subfamily. As to quaternary structure, part of the 50S ribosomal subunit.

The sequence is that of Large ribosomal subunit protein bL31B from Neisseria meningitidis serogroup B (strain ATCC BAA-335 / MC58).